Here is a 362-residue protein sequence, read N- to C-terminus: Biotin synthase (362 aa).

The Radical SAM core domain maps to 46-273; sequence NEVQVSTLLS…ASHVRLSAGR (228 aa). Positions 61, 65, and 68 each coordinate [4Fe-4S] cluster. [2Fe-2S] cluster-binding residues include Cys105, Cys136, Cys196, and Arg268. A disordered region spans residues 320 to 339; sequence PAQRAQKPDQVQEEELLAEV.

Belongs to the radical SAM superfamily. Biotin synthase family. As to quaternary structure, homodimer. [4Fe-4S] cluster is required as a cofactor. The cofactor is [2Fe-2S] cluster.

The enzyme catalyses (4R,5S)-dethiobiotin + (sulfur carrier)-SH + 2 reduced [2Fe-2S]-[ferredoxin] + 2 S-adenosyl-L-methionine = (sulfur carrier)-H + biotin + 2 5'-deoxyadenosine + 2 L-methionine + 2 oxidized [2Fe-2S]-[ferredoxin]. It participates in cofactor biosynthesis; biotin biosynthesis; biotin from 7,8-diaminononanoate: step 2/2. Functionally, catalyzes the conversion of dethiobiotin (DTB) to biotin by the insertion of a sulfur atom into dethiobiotin via a radical-based mechanism. This is Biotin synthase from Aeromonas hydrophila subsp. hydrophila (strain ATCC 7966 / DSM 30187 / BCRC 13018 / CCUG 14551 / JCM 1027 / KCTC 2358 / NCIMB 9240 / NCTC 8049).